The primary structure comprises 341 residues: HTH-type transcriptional repressor CytR (341 aa).

Positions 10–64 (ATMKDVALKAKVSTATVSRALMNPDKVSQATRNRVEKAAREVGYLPQPMGRNVKR) constitute an HTH lacI-type domain. A DNA-binding region (H-T-H motif) is located at residues 12-31 (MKDVALKAKVSTATVSRALM).

This protein negatively controls the transcription initiation of genes such as deoCABD, udp, and cdd encoding catabolizing enzymes and nupC, nupG, and tsx encoding transporting and pore-forming proteins. Binds cytidine and adenosine as effectors. In Escherichia coli (strain K12), this protein is HTH-type transcriptional repressor CytR (cytR).